A 155-amino-acid polypeptide reads, in one-letter code: Pathogenesis-related protein STH-21 (155 aa).

Belongs to the BetVI family.

In Solanum tuberosum (Potato), this protein is Pathogenesis-related protein STH-21 (STH-21).